A 623-amino-acid chain; its full sequence is Chaperone protein DnaK (623 aa).

A Phosphothreonine; by autocatalysis modification is found at T175. The segment at 580–623 (PEGAQGAGFDPNNMGGANAGNASAENDKKDDNVVDADYKVEDDK) is disordered. Residues 591–603 (NNMGGANAGNASA) are compositionally biased toward low complexity. Residues 604–623 (ENDKKDDNVVDADYKVEDDK) are compositionally biased toward basic and acidic residues.

This sequence belongs to the heat shock protein 70 family.

Its function is as follows. Acts as a chaperone. The polypeptide is Chaperone protein DnaK (Clostridium botulinum (strain Okra / Type B1)).